A 1401-amino-acid polypeptide reads, in one-letter code: Protein dispatched homolog 2 (1401 aa).

Disordered regions lie at residues 1-91 (MDGD…LAPA) and 113-138 (DRAA…GTWK). A helical transmembrane segment spans residues 170 to 190 (VAVLMLCLAVIFLCTLAGLLG). An N-linked (GlcNAc...) asparagine glycan is attached at asparagine 239. Residues 241 to 264 (SSSHNTLRPAPRGSAQESAVRPRR) form a disordered region. Residues asparagine 349 and asparagine 465 are each glycosylated (N-linked (GlcNAc...) asparagine). Residues 471–643 (GMDLGLKQEL…LVWLPASAVL (173 aa)) enclose the SSD domain. 11 consecutive transmembrane segments (helical) span residues 484–504 (FLVQ…FGMA), 510–530 (LFLT…AFFL), 542–562 (FVNL…TLIF), 589–609 (FGYL…ASYL), 617–637 (CLAL…LVWL), 704–724 (YIWI…AGVS), 964–984 (PAVV…LGTW), 990–1010 (LFSV…LVLL), 1019–1039 (ALFL…YCIS), 1064–1084 (AVGA…TVLL), and 1088–1108 (LGII…FFFQ). Disordered regions lie at residues 1169–1192 (ARRR…PSVL), 1229–1337 (PALQ…NGKR), and 1352–1401 (SLPA…GYSS). A compositionally biased stretch (polar residues) spans 1175-1184 (SFDTSTATSK). Over residues 1259 to 1270 (PLPASPEAPAHS) the composition is skewed to low complexity. Over residues 1284–1305 (SSASTLEGLSVSDETCLSTSEP) the composition is skewed to polar residues. Low complexity predominate over residues 1352–1362 (SLPASHHSSLS). Position 1366 is an omega-N-methylarginine (arginine 1366).

The protein belongs to the dispatched family.

It is found in the membrane. This chain is Protein dispatched homolog 2, found in Homo sapiens (Human).